Reading from the N-terminus, the 292-residue chain is Elongation factor Ts (292 aa).

The tract at residues 79–82 (TDFV) is involved in Mg(2+) ion dislocation from EF-Tu.

The protein belongs to the EF-Ts family.

Its subcellular location is the cytoplasm. Functionally, associates with the EF-Tu.GDP complex and induces the exchange of GDP to GTP. It remains bound to the aminoacyl-tRNA.EF-Tu.GTP complex up to the GTP hydrolysis stage on the ribosome. This is Elongation factor Ts from Xanthomonas euvesicatoria pv. vesicatoria (strain 85-10) (Xanthomonas campestris pv. vesicatoria).